The chain runs to 229 residues: Putative N-acetylmannosamine-6-phosphate 2-epimerase (229 aa).

The protein belongs to the NanE family.

The catalysed reaction is an N-acyl-D-glucosamine 6-phosphate = an N-acyl-D-mannosamine 6-phosphate. Its pathway is amino-sugar metabolism; N-acetylneuraminate degradation; D-fructose 6-phosphate from N-acetylneuraminate: step 3/5. Converts N-acetylmannosamine-6-phosphate (ManNAc-6-P) to N-acetylglucosamine-6-phosphate (GlcNAc-6-P). The protein is Putative N-acetylmannosamine-6-phosphate 2-epimerase of Shigella dysenteriae serotype 1 (strain Sd197).